We begin with the raw amino-acid sequence, 295 residues long: Small ribosomal subunit protein uS2 (295 aa).

Ser-2 carries the post-translational modification N-acetylserine. The residue at position 43 (Ser-43) is a Phosphoserine. Lys-52 bears the N6-acetyllysine mark. An interaction with PPP1R16B region spans residues 54–113 (TWEKLLLAARAIVAIENPADVSVISSRNTGQRAVLKFAAATGATPIAGRFTPGTFTNQIQ). Lys-89 carries the N6-acetyllysine; alternate modification. Residue Lys-89 forms a Glycyl lysine isopeptide (Lys-Gly) (interchain with G-Cter in SUMO2); alternate linkage. Phosphothreonine is present on Thr-97. Laminin-binding stretches follow at residues 161-180 (IPCNNKGAHSVGLMWWMLAR) and 205-229 (RDPEEIEKEEQAAAEKAVTKEEFQG). 5 [DE]-W-[ST] repeats span residues 230 to 232 (EWT), 247 to 249 (DWS), 266 to 268 (DWS), 275 to 277 (DWS), and 293 to 295 (EWS). The laminin-binding stretch occupies residues 242-295 (QPEVADWSEGVQVPSVPIQQFPTEDWSAQPATEDWSAAPTAQATEWVGTTTEWS). The disordered stretch occupies residues 266–295 (DWSAQPATEDWSAAPTAQATEWVGTTTEWS). The span at 280 to 295 (PTAQATEWVGTTTEWS) shows a compositional bias: polar residues.

The protein belongs to the universal ribosomal protein uS2 family. Monomer (37LRP) and homodimer (67LR). Component of the small ribosomal subunit. Mature ribosomes consist of a small (40S) and a large (60S) subunit. The 40S subunit contains about 33 different proteins and 1 molecule of RNA (18S). The 60S subunit contains about 49 different proteins and 3 molecules of RNA (28S, 5.8S and 5S). Interacts with RPS21. Interacts with several laminins including at least LAMB1. Interacts with MDK. The mature dimeric form interacts with PPP1R16B (via its fourth ankyrin repeat). Interacts with PPP1CA only in the presence of PPP1R16B. Acylated. Acylation may be a prerequisite for conversion of the monomeric 37 kDa laminin receptor precursor (37LRP) to the mature dimeric 67 kDa laminin receptor (67LR), and may provide a mechanism for membrane association. In terms of processing, cleaved by stromelysin-3 (ST3) at the cell surface. Cleavage by stromelysin-3 may be a mechanism to alter cell-extracellular matrix interactions.

It is found in the cell membrane. The protein resides in the cytoplasm. It localises to the nucleus. Its function is as follows. Required for the assembly and/or stability of the 40S ribosomal subunit. Required for the processing of the 20S rRNA-precursor to mature 18S rRNA in a late step of the maturation of 40S ribosomal subunits. Also functions as a cell surface receptor for laminin. Plays a role in cell adhesion to the basement membrane and in the consequent activation of signaling transduction pathways. May play a role in cell fate determination and tissue morphogenesis. Also acts as a receptor for several other ligands, including the pathogenic prion protein, viruses, and bacteria. Acts as a PPP1R16B-dependent substrate of PPP1CA. In Oryctolagus cuniculus (Rabbit), this protein is Small ribosomal subunit protein uS2.